Reading from the N-terminus, the 479-residue chain is Small ribosomal subunit protein bS1 (479 aa).

4 consecutive S1 motif domains span residues 36-105, 123-188, 209-277, and 294-363; these read GDIV…LSKK, DEAV…LSRR, GAIR…LSLK, and GQIV…LSLK. A disordered region spans residues 429 to 466; it reads TAQMEKFAAAEAEAANAPVSNGSSRSEESSGGTLASDA. A compositionally biased stretch (low complexity) spans 437 to 460; the sequence is AAEAEAANAPVSNGSSRSEESSGG.

It belongs to the bacterial ribosomal protein bS1 family. In terms of assembly, binds uncharacterized protein MSMEG_2731/MSMEI_2664.

Binds mRNA, facilitating recognition of most mRNAs by the 30S ribosomal subunit during translation initiation. Plays a role in trans-translation; binds tmRNA (the product of the ssrA gene). Binds very poorly to pyrazinoic acid (POA), the active form of the prodrug pyrazinamide (PZA); POA does not disrupt trans-translation in this organism. M.smegmatis is resistant to the antibiotic PZA. In trans-translation Ala-aminoacylated transfer-messenger RNA (tmRNA, product of the ssrA gene; the 2 termini fold to resemble tRNA(Ala) while it encodes a short internal open reading frame (the tag peptide)) acts like a tRNA, entering the A-site of the ribosome and displacing the stalled mRNA (which is subsequently degraded). The ribosome then switches to translate the ORF on the tmRNA, the nascent peptide is terminated with the 'tag peptide' encoded by the tmRNA and thus targeted for degradation. This Mycolicibacterium smegmatis (strain ATCC 700084 / mc(2)155) (Mycobacterium smegmatis) protein is Small ribosomal subunit protein bS1 (rpsA).